The chain runs to 474 residues: Neuronal acetylcholine receptor subunit eat-2 (474 aa).

Residues 1–21 (MTLKIAFFTLILLVSIERVYS) form the signal peptide. Over 22 to 237 (SDEEYRLLKD…MHLKRRTMYY (216 aa)) the chain is Extracellular. N-linked (GlcNAc...) asparagine glycosylation is present at asparagine 95. Cysteines 149 and 163 form a disulfide. A run of 3 helical transmembrane segments spans residues 238–258 (GLNWIVPSILISLSNILGFTM), 266–286 (ITLQITNFLSVMVFLAMVSEV), and 303–323 (LSIVILGLSICASLIIVNIFF). At 324–440 (RHPKTHRMGD…WRFMAMVIDR (117 aa)) the chain is on the cytoplasmic side. The disordered stretch occupies residues 359–378 (PRREEEKNDEEAGGDGTKLL). Residues 441–461 (LSLFLFTGLIFGTTALIFAFC) traverse the membrane as a helical segment.

Belongs to the ligand-gated ion channel (TC 1.A.9) family. Acetylcholine receptor (TC 1.A.9.1) subfamily. In terms of assembly, neuronal AChR seems to be composed of two different type of subunits: alpha and beta. Expressed in pharyngeal muscle.

Its subcellular location is the postsynaptic cell membrane. The protein localises to the cell membrane. Its function is as follows. After binding acetylcholine, the AChR responds by an extensive change in conformation that affects all subunits and leads to opening of an ion-conducting channel across the plasma membrane. Nicotinic acetylcholine receptor in the MC pharyngeal motor neuron involved in pharyngeal pumping. Has a role in the determination of life span possibly via calorific restriction which affects growth rate, although this is independent of metabolic activity. Plays a role in the defense against the accumulation of ingested live pathogenic bacteria in the intestine. The sequence is that of Neuronal acetylcholine receptor subunit eat-2 from Caenorhabditis elegans.